A 795-amino-acid polypeptide reads, in one-letter code: Phenylalanine--tRNA ligase beta subunit (795 aa).

The tRNA-binding domain occupies 39 to 148; it reads AGSFHGVVVG…ADAPIGTDIR (110 aa). The region spanning 401–476 is the B5 domain; the sequence is PKRATITLRR…RVYGYNNIPD (76 aa). Asp454, Asp460, Glu463, and Glu464 together coordinate Mg(2+). Positions 701 to 794 constitute an FDX-ACB domain; the sequence is SRFPANRRDI…LKERFQASLR (94 aa).

It belongs to the phenylalanyl-tRNA synthetase beta subunit family. Type 1 subfamily. Tetramer of two alpha and two beta subunits. Mg(2+) is required as a cofactor.

It localises to the cytoplasm. The enzyme catalyses tRNA(Phe) + L-phenylalanine + ATP = L-phenylalanyl-tRNA(Phe) + AMP + diphosphate + H(+). The polypeptide is Phenylalanine--tRNA ligase beta subunit (Shigella dysenteriae serotype 1 (strain Sd197)).